Here is a 228-residue protein sequence, read N- to C-terminus: MGPGWSPARRLWPLLWRRAVFQRAGPAMASVPWLPRLAERWLPARPATCLTPSLTRGLHHGPQPEERTAGDARLQPGPADHIGAKFDIDMLVSLLRQENARDICVIQVPPEMRYTDYFVIGSGTSTRHLHAMVHYLVKMYKHLKCRSDPYVKIEGKDADDWLCVDFGSMVIHLMLPETRETYELEKLWTLRSFDDQLAQIAAETLPEDFILGLEDDTSSLTPVEFKCK.

The tract at residues 53–77 (SLTRGLHHGPQPEERTAGDARLQPG) is disordered.

The protein belongs to the Iojap/RsfS family. In terms of assembly, associates with the mitochondrial ribosome large subunit (39S) via interaction with MRPL12 and/or MRPL14. The interaction generates steric hindrance that is expected to prevent premature association of the 28S and 39S ribosomal subunits. Identified in a complex composed of MALSU1, MIEF1 upstream open reading frame protein and NDUFAB1; within the trimeric complex, MIEF1 upstream open reading frame protein functions as a bridging scaffold that interacts with MALSU1 on one side, and with NDUFAB1 on the other side. Interacts with MRPL12 and MRPL14.

The protein localises to the mitochondrion matrix. Required for normal mitochondrial ribosome function and mitochondrial translation. May play a role in ribosome biogenesis by preventing premature association of the 28S and 39S ribosomal subunits. Interacts with mitochondrial ribosomal protein uL14m (MRPL14), probably blocking formation of intersubunit bridge B8, preventing association of the 28S and 39S ribosomal subunits. Addition to isolated mitochondrial ribosomal subunits partially inhibits translation, probably by interfering with the association of the 28S and 39S ribosomal subunits and the formation of functional ribosomes. May also participate in the assembly and/or regulation of the stability of the large subunit of the mitochondrial ribosome. May function as a ribosomal silencing factor. In Mus musculus (Mouse), this protein is Mitochondrial assembly of ribosomal large subunit protein 1 (Malsu1).